We begin with the raw amino-acid sequence, 363 residues long: Phosphoserine aminotransferase (363 aa).

Residue Arg-42 participates in L-glutamate binding. Residues 76–77 (GR), Trp-102, Thr-156, Asp-175, and Gln-198 each bind pyridoxal 5'-phosphate. At Lys-199 the chain carries N6-(pyridoxal phosphate)lysine. Residue 240–241 (NT) participates in pyridoxal 5'-phosphate binding.

This sequence belongs to the class-V pyridoxal-phosphate-dependent aminotransferase family. SerC subfamily. As to quaternary structure, homodimer. It depends on pyridoxal 5'-phosphate as a cofactor.

The protein localises to the cytoplasm. It carries out the reaction O-phospho-L-serine + 2-oxoglutarate = 3-phosphooxypyruvate + L-glutamate. The enzyme catalyses 4-(phosphooxy)-L-threonine + 2-oxoglutarate = (R)-3-hydroxy-2-oxo-4-phosphooxybutanoate + L-glutamate. The protein operates within amino-acid biosynthesis; L-serine biosynthesis; L-serine from 3-phospho-D-glycerate: step 2/3. Its pathway is cofactor biosynthesis; pyridoxine 5'-phosphate biosynthesis; pyridoxine 5'-phosphate from D-erythrose 4-phosphate: step 3/5. Catalyzes the reversible conversion of 3-phosphohydroxypyruvate to phosphoserine and of 3-hydroxy-2-oxo-4-phosphonooxybutanoate to phosphohydroxythreonine. This is Phosphoserine aminotransferase from Shewanella sp. (strain MR-4).